The chain runs to 117 residues: Immunoglobulin lambda variable 2 (117 aa).

Residues Met1–Ser19 form the signal peptide. A Pyrrolidone carboxylic acid modification is found at Gln20. One can recognise an Ig-like domain in the interval Gln20–Phe117.

The chain is Immunoglobulin lambda variable 2 from Mus musculus (Mouse).